The following is a 467-amino-acid chain: MAAIMSSYLFRGILMNLRFAQFLKNISSFESRIEKLSDIINYGRLVSINGLILEVVGLNTSIGSECLIERTIDGKNANINAEVIGFSGEKTFLLSFEDIHGIFPGARVFSKIASNSNFFIKKLPLGMELLGRVLDGRGQPLDQLPKIDHKYYSTIKNYSINPLNRTPITEVLDTGIRAINGLLTIGRGQKIGIFSSSGIGKSILLGMIARYTQADIIVIALIGERGREVKDFIENILGLAGLSRSVIIAAPADVSPLLKIKAASYATNIAEYFYKNNKHVLLIMDSLTRYAMAQREISLSLGELPVSKGYPSSIFSKIPNLIERTGIFNKNKGSITSFYTVLTEGEDEQDPVSHLARSVLDGHIMLSRYYADLGHYPAIDIESSISRVMPNIINAKQYSQAFYFKKLVASYQRNRDLINIGAYVSGTDVILDHAIKIWPKLEKFLQQEISEKSDYLFSCEALNKIFI.

195 to 202 (SSSGIGKS) serves as a coordination point for ATP.

It belongs to the ATPase alpha/beta chains family.

The protein localises to the cytoplasm. The enzyme catalyses ATP + H2O + 4 H(+)(in) = ADP + phosphate + 5 H(+)(out). Its function is as follows. Probable catalytic subunit of a protein translocase for flagellum-specific export, or a proton translocase involved in local circuits at the flagellum. May be involved in a specialized protein export pathway that proceeds without signal peptide cleavage. In Buchnera aphidicola subsp. Acyrthosiphon pisum (strain APS) (Acyrthosiphon pisum symbiotic bacterium), this protein is Flagellum-specific ATP synthase (fliI).